Consider the following 293-residue polypeptide: Pyridoxal 5'-phosphate synthase subunit PdxS (293 aa).

D-ribose 5-phosphate is bound at residue aspartate 23. Lysine 80 acts as the Schiff-base intermediate with D-ribose 5-phosphate in catalysis. Residue glycine 152 coordinates D-ribose 5-phosphate. Residue arginine 164 coordinates D-glyceraldehyde 3-phosphate. D-ribose 5-phosphate is bound by residues glycine 213 and 234-235 (GS).

Belongs to the PdxS/SNZ family. In the presence of PdxT, forms a dodecamer of heterodimers.

The enzyme catalyses aldehydo-D-ribose 5-phosphate + D-glyceraldehyde 3-phosphate + L-glutamine = pyridoxal 5'-phosphate + L-glutamate + phosphate + 3 H2O + H(+). It functions in the pathway cofactor biosynthesis; pyridoxal 5'-phosphate biosynthesis. Functionally, catalyzes the formation of pyridoxal 5'-phosphate from ribose 5-phosphate (RBP), glyceraldehyde 3-phosphate (G3P) and ammonia. The ammonia is provided by the PdxT subunit. Can also use ribulose 5-phosphate and dihydroxyacetone phosphate as substrates, resulting from enzyme-catalyzed isomerization of RBP and G3P, respectively. The sequence is that of Pyridoxal 5'-phosphate synthase subunit PdxS from Roseiflexus sp. (strain RS-1).